A 347-amino-acid chain; its full sequence is UDP-galactose/UDP-glucose transporter 5 (347 aa).

8 consecutive transmembrane segments (helical) span residues 17–37 (LWKA…YGLL), 57–77 (LFLV…ALLA), 116–136 (VQTL…TLIM), 143–163 (FDYL…LFPA), 177–197 (TVWG…TSTF), 218–238 (ICSS…LPAV), 247–267 (CLFD…FISY), and 293–313 (CIWF…IVFG). Residues 325–347 (SEKPPAAQELPRDEEAQPLKGNP) are disordered.

The protein belongs to the nucleotide-sugar transporter family. UDP-galactose:UMP antiporter (TC 2.A.7.11) subfamily.

The protein localises to the membrane. Sugar transporter involved in the transport of nucleotide-sugars from cytoplasm into the Golgi and/or the endoplasmic reticulum. This chain is UDP-galactose/UDP-glucose transporter 5, found in Arabidopsis thaliana (Mouse-ear cress).